Consider the following 429-residue polypeptide: Glutamate-1-semialdehyde 2,1-aminomutase 2 (429 aa).

N6-(pyridoxal phosphate)lysine is present on Lys-268.

The protein belongs to the class-III pyridoxal-phosphate-dependent aminotransferase family. HemL subfamily. Homodimer. The cofactor is pyridoxal 5'-phosphate.

Its subcellular location is the cytoplasm. It catalyses the reaction (S)-4-amino-5-oxopentanoate = 5-aminolevulinate. Its pathway is porphyrin-containing compound metabolism; protoporphyrin-IX biosynthesis; 5-aminolevulinate from L-glutamyl-tRNA(Glu): step 2/2. The polypeptide is Glutamate-1-semialdehyde 2,1-aminomutase 2 (Geobacillus thermodenitrificans (strain NG80-2)).